We begin with the raw amino-acid sequence, 208 residues long: Kininogen-1b (208 aa).

Residues 1-23 (MRLWFCLSFFIVLCLEHFPETLA) form the signal peptide. A compositionally biased stretch (basic and acidic residues) spans 27–44 (NVPESEEKTEQYLRDLPK). A disordered region spans residues 27 to 208 (NVPESEEKTE…RGKFHSQSHV (182 aa)).

This sequence belongs to the bradykinin-related peptide family. In terms of tissue distribution, expressed by the skin glands.

The protein resides in the secreted. Its function is as follows. In vitro, produces constriction of guinea pig ileum smooth muscle. May target bradykinin receptors (BDKRB). This is Kininogen-1b from Bombina maxima (Giant fire-bellied toad).